We begin with the raw amino-acid sequence, 1378 residues long: Attractin-like protein 1 (1378 aa).

A signal peptide spans 1 to 51 (MEPGVRARSGAPQPASPVLWRARPAGGGGASSWLLLDGNSWLLCYGFLYLA). Residues 52-90 (LYAQVSQSKPCERTGSCFSGRCVNSTCLCDPGWVGDQCQ) enclose the EGF-like 1 domain. Residues 52–1229 (LYAQVSQSKP…FSQHNTIMDL (1178 aa)) lie on the Extracellular side of the membrane. 3 disulfide bridges follow: C62/C78, C80/C89, and C92/C118. The N-linked (GlcNAc...) asparagine glycan is linked to N75. Residues 92–208 (CQGRFKLTEP…TGFNIFYSIN (117 aa)) form the CUB domain. N-linked (GlcNAc...) asparagine glycosylation is found at N173 and N197. An EGF-like 2 domain is found at 206 to 244 (SINSCPNNCSGHGKCTTSVSVASQVYCECDKYWKGEACD). 3 cysteine pairs are disulfide-bonded: C210/C220, C214/C232, and C234/C243. 6 Kelch repeats span residues 315–364 (FMWV…LYQE), 366–414 (IFMY…EGHS), 426–474 (VMIV…SVYD), 479–530 (SIYV…LING), 532–590 (MLIF…VING), and 591–637 (SMYI…WNKN). N379 carries N-linked (GlcNAc...) asparagine glycosylation. PSI domains lie at 613–656 (NCKA…AKCP), 665–708 (RCYR…TKCH), and 714–759 (ICNK…DACL). N-linked (GlcNAc...) asparagine glycosylation occurs at N703. In terms of domain architecture, C-type lectin spans 754-872 (VGDACLRINS…TSMADGLVCE (119 aa)). Residues C775 and C871 are joined by a disulfide bond. 2 N-linked (GlcNAc...) asparagine glycosylation sites follow: N777 and N897. PSI domains lie at 888–938 (PCSL…ATCS) and 941–1011 (NCSG…IQCP). Disulfide bonds link C1013–C1021, C1015–C1027, C1030–C1039, C1042–C1056, C1059–C1068, C1061–C1075, C1077–C1087, and C1090–C1105. Laminin EGF-like domains follow at residues 1013–1058 (CQCN…QCTA) and 1059–1107 (CTCG…TCYY). N-linked (GlcNAc...) asparagine glycosylation is present at N1156. A helical membrane pass occupies residues 1230-1250 (VQFFVTFFSCFLSLLLVAAVV). The Cytoplasmic segment spans residues 1251-1378 (WKIKQTCWAS…HLSTRQGTCV (128 aa)). The interaction with MC4R stretch occupies residues 1287–1324 (VGAEQTDFLRGPLEGAPKPIAIEPCAGNRAAVLTVFLC). A disordered region spans residues 1351–1378 (QQKPSDNKDKTSGVRNRKHLSTRQGTCV).

Interacts with MC4R. Highly expressed in brain, heart, lung, kidney and liver. In the central nervous system, it is highly expressed in the dentate gyrus, CA1-3 regions of the hippocampus, and the ventral taenia tecta.

The protein resides in the cell membrane. Its function is as follows. May play a role in melanocortin signaling pathways that regulate energy homeostasis. This is Attractin-like protein 1 (Atrnl1) from Mus musculus (Mouse).